The following is a 547-amino-acid chain: Inositol-tetrakisphosphate 1-kinase 6 (547 aa).

K263 is a 1D-myo-inositol 1,3,4-trisphosphate binding site. ATP is bound by residues R317 and K370. The ATP-grasp domain maps to 327–539 (LEGLSAEGRP…FWDAIKQSYE (213 aa)). Residues H381 and K415 each contribute to the 1D-myo-inositol 1,3,4-trisphosphate site. ATP-binding positions include 404-415 (QEYIDHGSKIFK), S430, and S450. 3 residues coordinate Mg(2+): D497, D511, and N513. N513 and S517 together coordinate 1D-myo-inositol 1,3,4-trisphosphate.

The protein belongs to the ITPK1 family. As to quaternary structure, monomer. The cofactor is Mg(2+). In terms of tissue distribution, highly expressed in embryos and at lower levels in roots, leaves, flowers and anthers.

It catalyses the reaction 1D-myo-inositol 3,4,5,6-tetrakisphosphate + ATP = 1D-myo-inositol 1,3,4,5,6-pentakisphosphate + ADP + H(+). The enzyme catalyses 1D-myo-inositol 1,3,4-trisphosphate + ATP = 1D-myo-inositol 1,3,4,5-tetrakisphosphate + ADP + H(+). The catalysed reaction is 1D-myo-inositol 1,3,4-trisphosphate + ATP = 1D-myo-inositol 1,3,4,6-tetrakisphosphate + ADP + H(+). Functionally, kinase that can phosphorylate various inositol polyphosphate such as Ins(3,4,5,6)P4 or Ins(1,3,4)P3 and participates in phytic acid biosynthesis in developing seeds. Phytic acid is the primary storage form of phosphorus in cereal grains and other plant seeds. In Oryza sativa subsp. japonica (Rice), this protein is Inositol-tetrakisphosphate 1-kinase 6 (ITPK6).